A 61-amino-acid chain; its full sequence is Photosystem II assembly protein Psb34 (61 aa).

Residues 36-56 (LIMAAITVVLVAGLIAVAVVA) traverse the membrane as a helical segment.

This sequence belongs to the Psb34 family. In terms of assembly, part of the photosystem II (PSII) assembly intermediate RC47 complex (with D1, D2, CP47, PsbE, PsbF, PsbH, Psb27 and Psb28); minor amounts are found in other PSII complexes, including mature, dimeric PSII with PsbO and PsbV. No HliA or HliB are detected in any of these complexes. Its interaction with PSII requires both CP47 (psbB) and PsbH. HliA/HliB and Psb34 probably bind to a similar site on CP47; their binding seems to be mutually exclusive.

It is found in the cellular thylakoid membrane. In terms of biological role, involved in photosystem II (PSII) assembly and/or repair. Probably involved in conversion of late PSII assembly intermediates into mature dimeric PSII, it may mediate the optimal equlibrium of HliA/HliB among the intermediates containing CP47 (psbB) to facilitate photoprotection during assembly. This is Photosystem II assembly protein Psb34 from Synechocystis sp. (strain ATCC 27184 / PCC 6803 / Kazusa).